The sequence spans 669 residues: MTIKILPARLANQIAAGEVVERPASVIKELVENSLDSGATRIDIDIEKGGAKLIRVRDNGKGIAKDELGLALSRHATSKIHTLDDLEAIMSLGFRGEALASISSVSRLTLTSRPAAQEEAWSAYSEGRDMQVKLQPAAHPIGTTVEVLDLFFNTPARRKFLRTEKTEFAHIDELLKRIALSRFDVSINVRHNGKVIRQYRAAKNQLQTEKRIAAVCGNAFVRNMLRIELEHQGLKLHGWITTPDGARQQSDLQYCYVNGRMMRDKLINHAIRQSYEMSLKPDQFAAYVLFIELDPHQVDVNVHPAKHEVRFHQARLVHDFIYQALADALAQSSVIDKPQVNESAFHRAEPEERESQPETTPQYSPQSVSTTVPERVYQAIDKTPTYPGRTDYEIKPRDRAPSDSSVREARIADSFKRTDWIESKLAPKPNVGKERHAEPAPSKREVHAYHELLKTPDFESQQAEQPTSIESVREVSLPQVTALGKALVVVDEQFVLMSSDSGVALVSLPRSEFYRTKGQLTPSEGALKAQPLLVPLSMKLDTDLVRLAQDYQQDFAQLGIQLKARNDKALMVMGVPAPLRQQNLQNLVPDLLSYAQTWMKGEKASTQMLPALIDWLAVQVTTVKSHYTLSEAIQIIAELEQLRHGQLPLDDKTFVSAVDFSATIAKLKP.

The disordered stretch occupies residues 343-408 (SAFHRAEPEE…RAPSDSSVRE (66 aa)). The segment covering 344–356 (AFHRAEPEERESQ) has biased composition (basic and acidic residues). Polar residues predominate over residues 357-372 (PETTPQYSPQSVSTTV). The span at 390 to 408 (TDYEIKPRDRAPSDSSVRE) shows a compositional bias: basic and acidic residues.

The protein belongs to the DNA mismatch repair MutL/HexB family.

Functionally, this protein is involved in the repair of mismatches in DNA. It is required for dam-dependent methyl-directed DNA mismatch repair. May act as a 'molecular matchmaker', a protein that promotes the formation of a stable complex between two or more DNA-binding proteins in an ATP-dependent manner without itself being part of a final effector complex. The chain is DNA mismatch repair protein MutL from Vibrio parahaemolyticus serotype O3:K6 (strain RIMD 2210633).